A 177-amino-acid chain; its full sequence is MTEMVPAWVEGRLMPVEKLEAHQRGLRHMAISVFVMAGEAVLIQRRAAGKYHTPGLWANTCCTHPRWGEEAADCAVRRLREELGITGLVTVFADRVEYRADVGNGLIEHEVVDIFVAEAPSDLPVNPDPEEVWETRWVDLTDLAREVKEHPERFTPWLRIYLAEHMERIFGKLRVVQ.

Positions 22 and 28 each coordinate Mn(2+). The Nudix hydrolase domain maps to 26-160; it reads LRHMAISVFV…PERFTPWLRI (135 aa). Residue Cys62 is part of the active site. His64 is a Mn(2+) binding site. Glu82 lines the Mg(2+) pocket. Mn(2+) is bound by residues Glu108 and Glu110. The active site involves Glu110.

This sequence belongs to the IPP isomerase type 1 family. The cofactor is Mg(2+). It depends on Mn(2+) as a cofactor.

It is found in the cytoplasm. The enzyme catalyses isopentenyl diphosphate = dimethylallyl diphosphate. It participates in isoprenoid biosynthesis; dimethylallyl diphosphate biosynthesis; dimethylallyl diphosphate from isopentenyl diphosphate: step 1/1. It functions in the pathway porphyrin-containing compound metabolism; chlorophyll biosynthesis. Its function is as follows. Catalyzes the 1,3-allylic rearrangement of the homoallylic substrate isopentenyl (IPP) to its highly electrophilic allylic isomer, dimethylallyl diphosphate (DMAPP). This Cereibacter sphaeroides (strain KD131 / KCTC 12085) (Rhodobacter sphaeroides) protein is Isopentenyl-diphosphate Delta-isomerase.